Reading from the N-terminus, the 154-residue chain is D-aminoacyl-tRNA deacylase (154 aa).

Positions 137 to 138 (GP) match the Gly-cisPro motif, important for rejection of L-amino acids motif.

Belongs to the DTD family. In terms of assembly, homodimer.

It is found in the cytoplasm. It catalyses the reaction glycyl-tRNA(Ala) + H2O = tRNA(Ala) + glycine + H(+). The enzyme catalyses a D-aminoacyl-tRNA + H2O = a tRNA + a D-alpha-amino acid + H(+). An aminoacyl-tRNA editing enzyme that deacylates mischarged D-aminoacyl-tRNAs. Also deacylates mischarged glycyl-tRNA(Ala), protecting cells against glycine mischarging by AlaRS. Acts via tRNA-based rather than protein-based catalysis; rejects L-amino acids rather than detecting D-amino acids in the active site. By recycling D-aminoacyl-tRNA to D-amino acids and free tRNA molecules, this enzyme counteracts the toxicity associated with the formation of D-aminoacyl-tRNA entities in vivo and helps enforce protein L-homochirality. The protein is D-aminoacyl-tRNA deacylase of Thermomicrobium roseum (strain ATCC 27502 / DSM 5159 / P-2).